Here is a 348-residue protein sequence, read N- to C-terminus: Sulfate/thiosulfate import ATP-binding protein CysA (348 aa).

Residues 3 to 237 (IEVRNIVKEF…PASAFVHGFI (235 aa)) form the ABC transporter domain. 35-42 (GPSGSGKT) contributes to the ATP binding site.

This sequence belongs to the ABC transporter superfamily. Sulfate/tungstate importer (TC 3.A.1.6) family. As to quaternary structure, the complex is composed of two ATP-binding proteins (CysA), two transmembrane proteins (CysT and CysW) and a solute-binding protein (CysP).

It is found in the cell inner membrane. The enzyme catalyses sulfate(out) + ATP + H2O = sulfate(in) + ADP + phosphate + H(+). It carries out the reaction thiosulfate(out) + ATP + H2O = thiosulfate(in) + ADP + phosphate + H(+). In terms of biological role, part of the ABC transporter complex CysAWTP involved in sulfate/thiosulfate import. Responsible for energy coupling to the transport system. The protein is Sulfate/thiosulfate import ATP-binding protein CysA of Rhodopseudomonas palustris (strain ATCC BAA-98 / CGA009).